The sequence spans 80 residues: Protein YibX (80 aa).

The chain is Protein YibX from Escherichia coli (strain K12).